The sequence spans 171 residues: Large ribosomal subunit protein uL10 (171 aa).

This sequence belongs to the universal ribosomal protein uL10 family. As to quaternary structure, part of the ribosomal stalk of the 50S ribosomal subunit. The N-terminus interacts with L11 and the large rRNA to form the base of the stalk. The C-terminus forms an elongated spine to which L12 dimers bind in a sequential fashion forming a multimeric L10(L12)X complex.

Functionally, forms part of the ribosomal stalk, playing a central role in the interaction of the ribosome with GTP-bound translation factors. This Phenylobacterium zucineum (strain HLK1) protein is Large ribosomal subunit protein uL10.